Here is a 73-residue protein sequence, read N- to C-terminus: Large ribosomal subunit protein uL29 (73 aa).

Belongs to the universal ribosomal protein uL29 family.

This is Large ribosomal subunit protein uL29 from Synechococcus sp. (strain JA-2-3B'a(2-13)) (Cyanobacteria bacterium Yellowstone B-Prime).